Consider the following 267-residue polypeptide: Indole-3-glycerol phosphate synthase (267 aa).

Belongs to the TrpC family.

The enzyme catalyses 1-(2-carboxyphenylamino)-1-deoxy-D-ribulose 5-phosphate + H(+) = (1S,2R)-1-C-(indol-3-yl)glycerol 3-phosphate + CO2 + H2O. It participates in amino-acid biosynthesis; L-tryptophan biosynthesis; L-tryptophan from chorismate: step 4/5. The chain is Indole-3-glycerol phosphate synthase from Deinococcus radiodurans (strain ATCC 13939 / DSM 20539 / JCM 16871 / CCUG 27074 / LMG 4051 / NBRC 15346 / NCIMB 9279 / VKM B-1422 / R1).